We begin with the raw amino-acid sequence, 419 residues long: Tryptophan synthase beta chain (419 aa).

Lys86 is modified (N6-(pyridoxal phosphate)lysine). The segment covering 394–403 has biased composition (basic and acidic residues); the sequence is VEQQKVEQQK. Residues 394-419 form a disordered region; sequence VEQQKVEQQKADNQNTEKNNQESGNE. Residues 404–419 are compositionally biased toward polar residues; sequence ADNQNTEKNNQESGNE.

Belongs to the TrpB family. Tetramer of two alpha and two beta chains. Pyridoxal 5'-phosphate is required as a cofactor.

It carries out the reaction (1S,2R)-1-C-(indol-3-yl)glycerol 3-phosphate + L-serine = D-glyceraldehyde 3-phosphate + L-tryptophan + H2O. It functions in the pathway amino-acid biosynthesis; L-tryptophan biosynthesis; L-tryptophan from chorismate: step 5/5. In terms of biological role, the beta subunit is responsible for the synthesis of L-tryptophan from indole and L-serine. This Shewanella halifaxensis (strain HAW-EB4) protein is Tryptophan synthase beta chain.